The primary structure comprises 1624 residues: ATP-binding cassette sub-family A member 6 (1624 aa).

Residues Leu-31–Ala-51 traverse the membrane as a helical segment. N-linked (GlcNAc...) asparagine glycosylation is found at Asn-84 and Asn-91. Helical transmembrane passes span Ile-222 to Val-242, Trp-267 to Thr-287, Phe-297 to Leu-317, Val-326 to Val-346, Glu-356 to Phe-376, and Val-395 to Leu-415. The 236-residue stretch at Ile-478–Phe-713 folds into the ABC transporter 1 domain. Gly-514–Ser-521 is a binding site for ATP. Asn-576 carries N-linked (GlcNAc...) asparagine glycosylation. A run of 8 helical transmembrane segments spans residues Ala-854 to Val-874, Leu-971 to His-991, Phe-1005 to Cys-1025, Trp-1058 to Phe-1078, Ile-1094 to Tyr-1114, Trp-1130 to Phe-1150, Leu-1154 to Leu-1174, and Ala-1194 to Leu-1214. One can recognise an ABC transporter 2 domain in the interval Leu-1282–Arg-1520. Gly-1320–Ser-1327 is a binding site for ATP.

It belongs to the ABC transporter superfamily. ABCA family. Widely expressed with higher expression in heart, lung, brain, spleen and testis.

It localises to the golgi apparatus membrane. In terms of biological role, probable transporter which may play a role in macrophage lipid transport and homeostasis. The sequence is that of ATP-binding cassette sub-family A member 6 (Abca6) from Mus musculus (Mouse).